The primary structure comprises 337 residues: uncharacterized protein (337 aa).

The F-box domain maps to 22 to 76; sequence PFRLLSLPTLALKNVLLHIDFIDLLELSLASKKCEIYMKTCCLKIDSLHFHFRRI.

This is an uncharacterized protein from Caenorhabditis elegans.